A 40-amino-acid polypeptide reads, in one-letter code: uncharacterized protein (40 aa).

This is an uncharacterized protein from Leptolyngbya boryana (Plectonema boryanum).